We begin with the raw amino-acid sequence, 213 residues long: MNLLIMGLPGAGKGTQAAKIVEEFGVIHISTGDMFRAAMANQTEMGLLAKSYIDKGDLVPDEVTNGIVKERLSQDDIKEKGFLLDGYPRTIDQAHALDATLADLGLKLNGVVNIDVDPNSLVERLSGRIIHKKTGETFHKIFNPPAGDYDENDYYQREDDKPETVKRRLDVNIAQGQPIIDHYRKSGIVHDIQGNQEISEVFVDIKKVIESLA.

Residue 10 to 15 (GAGKGT) coordinates ATP. Positions 30 to 59 (STGDMFRAAMANQTEMGLLAKSYIDKGDLV) are NMP. Residues Thr31, Arg36, 57-59 (DLV), 86-89 (GYPR), and Gln93 contribute to the AMP site. Residues 127–160 (GRIIHKKTGETFHKIFNPPAGDYDENDYYQREDD) form an LID region. Residues Arg128 and 137–138 (TF) contribute to the ATP site. Positions 157 and 168 each coordinate AMP. Gln196 lines the ATP pocket.

It belongs to the adenylate kinase family. Monomer.

The protein resides in the cytoplasm. The enzyme catalyses AMP + ATP = 2 ADP. It participates in purine metabolism; AMP biosynthesis via salvage pathway; AMP from ADP: step 1/1. Functionally, catalyzes the reversible transfer of the terminal phosphate group between ATP and AMP. Plays an important role in cellular energy homeostasis and in adenine nucleotide metabolism. In Streptococcus uberis (strain ATCC BAA-854 / 0140J), this protein is Adenylate kinase.